Reading from the N-terminus, the 291-residue chain is Small ribosomal subunit biogenesis GTPase RsgA (291 aa).

Residues Lys-63–Leu-221 form the CP-type G domain. GTP contacts are provided by residues Thr-112–Asp-115 and Gly-164–Thr-172. The Zn(2+) site is built by Cys-245, Cys-250, His-252, and Cys-258.

Belongs to the TRAFAC class YlqF/YawG GTPase family. RsgA subfamily. As to quaternary structure, monomer. Associates with 30S ribosomal subunit, binds 16S rRNA. Zn(2+) is required as a cofactor.

Its subcellular location is the cytoplasm. Functionally, one of several proteins that assist in the late maturation steps of the functional core of the 30S ribosomal subunit. Helps release RbfA from mature subunits. May play a role in the assembly of ribosomal proteins into the subunit. Circularly permuted GTPase that catalyzes slow GTP hydrolysis, GTPase activity is stimulated by the 30S ribosomal subunit. The polypeptide is Small ribosomal subunit biogenesis GTPase RsgA (Staphylococcus aureus (strain MRSA252)).